A 271-amino-acid polypeptide reads, in one-letter code: Dipeptidyl-peptidase 6 (271 aa).

SH3b domains are found at residues 1-64 and 72-140; these read MNAI…LFDD and QKAQ…HPKI. The region spanning 148-268 is the NlpC/P60 domain; it reads HAFRENVVQT…DLATTITAIG (121 aa). The active-site Nucleophile is Cys178. The Proton acceptor role is filled by His224. The active site involves His236.

The protein belongs to the peptidase C40 family.

Its subcellular location is the cytoplasm. Functionally, involved in cell sporulation. Hydrolyzes gamma-D-Glu-L-(meso)A2pm linkages only in those peptide units that have a free N-terminal L-alanine. The sequence is that of Dipeptidyl-peptidase 6 from Lysinibacillus sphaericus (Bacillus sphaericus).